The following is a 132-amino-acid chain: Ribosome-binding factor A (132 aa).

The protein belongs to the RbfA family. Monomer. Binds 30S ribosomal subunits, but not 50S ribosomal subunits or 70S ribosomes.

The protein localises to the cytoplasm. Its function is as follows. One of several proteins that assist in the late maturation steps of the functional core of the 30S ribosomal subunit. Associates with free 30S ribosomal subunits (but not with 30S subunits that are part of 70S ribosomes or polysomes). Required for efficient processing of 16S rRNA. May interact with the 5'-terminal helix region of 16S rRNA. The protein is Ribosome-binding factor A of Pectobacterium atrosepticum (strain SCRI 1043 / ATCC BAA-672) (Erwinia carotovora subsp. atroseptica).